The primary structure comprises 520 residues: Solute carrier family 2, facilitated glucose transporter member 14 (520 aa).

The Cytoplasmic segment spans residues 1–29; the sequence is MEFHNGGHVSGIGGFLVSLTSRMKPHTLA. A helical membrane pass occupies residues 30–50; that stretch reads VTPALIFAITVATIGSFQFGY. The Extracellular segment spans residues 51–88; the sequence is NTGVINAPETIIKEFINKTLTDKANAPPSEVLLTNLWS. N-linked (GlcNAc...) asparagine glycosylation occurs at Asn-67. Residues 89-109 traverse the membrane as a helical segment; the sequence is LSVAIFSVGGMIGSFSVGLFV. Topologically, residues 110-117 are cytoplasmic; that stretch reads NRFGRRNS. A helical membrane pass occupies residues 118-138; the sequence is MLIVNLLAATGGCLMGLCKIA. At 139-148 the chain is on the extracellular side; it reads ESVEMLILGR. Residues 149–169 traverse the membrane as a helical segment; sequence LVIGLFCGLCTGFVPMYIGEI. Residues 170–177 lie on the Cytoplasmic side of the membrane; sequence SPTALRGA. Residues 178–198 form a helical membrane-spanning segment; it reads FGTLNQLGIVIGILVAQIFGL. Position 183 (Gln-183) interacts with D-glucose. Over 199-207 the chain is Extracellular; sequence ELILGSEEL. A helical membrane pass occupies residues 208–228; the sequence is WPVLLGFTILPAILQSAALPC. Topologically, residues 229–293 are cytoplasmic; sequence CPESPRFLLI…LFRVSSYRQP (65 aa). A helical membrane pass occupies residues 294–314; sequence IIISIVLQLSQQLSGINAVFY. Residues 304–305 and Asn-310 contribute to the D-glucose site; that span reads QQ. Topologically, residues 315 to 328 are extracellular; that stretch reads YSTGIFKDAGVQQP. A helical transmembrane segment spans residues 329-349; the sequence is IYATISAGVVNTIFTLLSLFL. Residue Asn-339 participates in D-glucose binding. The Cytoplasmic segment spans residues 350 to 358; it reads VERAGRRTL. Residues 359-379 form a helical membrane-spanning segment; the sequence is HMIGLGGMAFCSTLMTVSLLL. At 380-392 the chain is on the extracellular side; the sequence is KNHYNGMSFVCIG. The chain crosses the membrane as a helical span at residues 393–413; the sequence is AILVFVACFEIGPGPIPWFIV. D-glucose-binding residues include Glu-402 and Trp-410. Over 414 to 423 the chain is Cytoplasmic; it reads AELFSQGPRP. The helical transmembrane segment at 424-444 threads the bilayer; the sequence is AAMAVAGCSNWTSNFLVGLLF. The Extracellular portion of the chain corresponds to 445–451; that stretch reads PSAAYYL. The chain crosses the membrane as a helical span at residues 452 to 472; it reads GAYVFIIFTGFLITFLAFTFF. Residues 473–520 are Cytoplasmic-facing; that stretch reads KVPETRGRTFEDITRAFEGQAHGADRSGKDGVMGMNSIEPAKETTTNV. The disordered stretch occupies residues 493-520; sequence AHGADRSGKDGVMGMNSIEPAKETTTNV.

It belongs to the major facilitator superfamily. Sugar transporter (TC 2.A.1.1) family. Glucose transporter subfamily. Mainly expressed in testis. Also expressed in small intestine, liver and kidney.

It localises to the cell membrane. It catalyses the reaction D-glucose(out) = D-glucose(in). The catalysed reaction is L-dehydroascorbate(out) = L-dehydroascorbate(in). Hexose transporter that can mediate the transport of glucose and dehydroascorbate across the cell membrane. This Homo sapiens (Human) protein is Solute carrier family 2, facilitated glucose transporter member 14.